We begin with the raw amino-acid sequence, 457 residues long: UDP-glycosyltransferase 708C2 (457 aa).

The active-site Proton acceptor is the His32. His32 serves as a coordination point for an anthocyanidin. Residue Asp129 is the Charge relay of the active site. Residue Thr150 coordinates UDP-alpha-D-glucose. The tract at residues 279 to 280 (NR) is UDP. The UDP-alpha-D-glucose site is built by Val341, Gln343, His358, Trp361, Asn362, Ser363, and Glu366. Gly381 contacts an anthocyanidin. UDP-alpha-D-glucose is bound by residues Asp382 and Gln383.

Belongs to the UDP-glycosyltransferase family. As to expression, expressed in cotyledons. Not detected in flowers, leaves, roots and hypocotyls.

The catalysed reaction is a 3'-hydro-2'-hydroxy-beta-oxodihydrochalcone + UDP-alpha-D-glucose = a 3'-(beta-D-glucopyranosyl)-2'-hydroxy-beta-oxodihydrochalcone + UDP + H(+). In terms of biological role, UDP-glucose-dependent glucosyltransferase catalyzing the c-glucosylation of 2-hydroxyflavanones (2-hydroxynaringenin, 2-hydroxyeriodictyol and 2-hydroxypinocembrin) and phloretin. No activity with flavanones, flavones or flavonols. This Fagopyrum esculentum (Common buckwheat) protein is UDP-glycosyltransferase 708C2.